Consider the following 327-residue polypeptide: Undecaprenyl-phosphate 4-deoxy-4-formamido-L-arabinose transferase (327 aa).

2 helical membrane passes run 233 to 253 (ILSL…LLLI) and 268 to 288 (VFTL…GMGL).

This sequence belongs to the glycosyltransferase 2 family.

It is found in the cell inner membrane. The catalysed reaction is UDP-4-deoxy-4-formamido-beta-L-arabinose + di-trans,octa-cis-undecaprenyl phosphate = 4-deoxy-4-formamido-alpha-L-arabinopyranosyl di-trans,octa-cis-undecaprenyl phosphate + UDP. The protein operates within glycolipid biosynthesis; 4-amino-4-deoxy-alpha-L-arabinose undecaprenyl phosphate biosynthesis; 4-amino-4-deoxy-alpha-L-arabinose undecaprenyl phosphate from UDP-4-deoxy-4-formamido-beta-L-arabinose and undecaprenyl phosphate: step 1/2. It functions in the pathway bacterial outer membrane biogenesis; lipopolysaccharide biosynthesis. Catalyzes the transfer of 4-deoxy-4-formamido-L-arabinose from UDP to undecaprenyl phosphate. The modified arabinose is attached to lipid A and is required for resistance to polymyxin and cationic antimicrobial peptides. The polypeptide is Undecaprenyl-phosphate 4-deoxy-4-formamido-L-arabinose transferase (Pectobacterium atrosepticum (strain SCRI 1043 / ATCC BAA-672) (Erwinia carotovora subsp. atroseptica)).